A 302-amino-acid polypeptide reads, in one-letter code: uncharacterized protein (302 aa).

The next 7 membrane-spanning stretches (helical) occupy residues 25–45 (SFIF…LQIF), 58–78 (FSYL…VIAL), 104–124 (IQVG…WMFL), 158–178 (YGLL…ATVL), 182–202 (FAWA…QYVP), 215–235 (ALSI…GYLL), and 247–267 (MMYI…MFYL). The PQ-loop domain maps to 175–245 (ATVLSSNFAW…SRLPGTNWTT (71 aa)).

It localises to the membrane. This is an uncharacterized protein from Schizosaccharomyces pombe (strain 972 / ATCC 24843) (Fission yeast).